Reading from the N-terminus, the 452-residue chain is Probable ECA polymerase (452 aa).

11 helical membrane-spanning segments follow: residues 6–26 (FSGL…LTWF), 37–57 (VFFS…TSVL), 63–83 (VGVA…CFYG), 118–138 (VILM…NGFL), 155–175 (GVAL…VYFL), 181–201 (AWLF…MIVG), 207–227 (IIIA…ISLW), 228–248 (MLAA…LKRY), 341–361 (LVVM…GLII), 378–398 (YKAA…IVLA), and 410–430 (VFFL…FWLF).

Belongs to the WzyE family. In terms of assembly, probably part of a complex composed of WzxE, WzyE and WzzE.

The protein localises to the cell inner membrane. The protein operates within bacterial outer membrane biogenesis; enterobacterial common antigen biosynthesis. Probably involved in the polymerization of enterobacterial common antigen (ECA) trisaccharide repeat units. This chain is Probable ECA polymerase, found in Salmonella typhi.